The following is a 72-amino-acid chain: Putative sodium channel toxin Ts18 (72 aa).

Positions 1-21 (MNFRFPFLLMITISLIGAVLT) are cleaved as a signal peptide. 3 disulfide bridges follow: Cys38–Cys61, Cys47–Cys66, and Cys51–Cys68.

Belongs to the long (3 C-C) scorpion toxin superfamily. In terms of tissue distribution, expressed by the venom gland.

It localises to the secreted. Binds to sodium channels (Nav) and affects the channel activation process. This chain is Putative sodium channel toxin Ts18, found in Tityus serrulatus (Brazilian scorpion).